The primary structure comprises 843 residues: Structure-specific endonuclease subunit SLX4 (843 aa).

5 disordered regions span residues 26 to 111 (SPPS…KTTT), 281 to 313 (AIPT…QKGK), 339 to 377 (NVAP…NGPP), 603 to 655 (SKTF…AKAL), and 729 to 748 (ATPN…FSIE). 2 stretches are compositionally biased toward polar residues: residues 50–69 (ASFS…NGEN) and 285–301 (PTES…SSKQ). Basic residues predominate over residues 302-311 (QRVKAKKPQK). Composition is skewed to polar residues over residues 349–372 (NISN…TLKN) and 603–616 (SKTF…NQGT). Over residues 617–636 (DDARKNGFRKENHSDVRVRP) the composition is skewed to basic and acidic residues. The span at 739–748 (RSSSTSFSIE) shows a compositional bias: low complexity.

It belongs to the SLX4 family. As to quaternary structure, forms a heterodimer with SLX1. Post-translationally, phosphorylated in response to DNA damage.

It is found in the nucleus. Regulatory subunit of the SLX1-SLX4 structure-specific endonuclease that resolves DNA secondary structures generated during DNA repair and recombination. Has endonuclease activity towards branched DNA substrates, introducing single-strand cuts in duplex DNA close to junctions with ss-DNA. In Ajellomyces capsulatus (strain G186AR / H82 / ATCC MYA-2454 / RMSCC 2432) (Darling's disease fungus), this protein is Structure-specific endonuclease subunit SLX4.